Reading from the N-terminus, the 175-residue chain is ATP synthase subunit delta (175 aa).

It belongs to the ATPase delta chain family. As to quaternary structure, F-type ATPases have 2 components, F(1) - the catalytic core - and F(0) - the membrane proton channel. F(1) has five subunits: alpha(3), beta(3), gamma(1), delta(1), epsilon(1). F(0) has three main subunits: a(1), b(2) and c(10-14). The alpha and beta chains form an alternating ring which encloses part of the gamma chain. F(1) is attached to F(0) by a central stalk formed by the gamma and epsilon chains, while a peripheral stalk is formed by the delta and b chains.

It localises to the cell inner membrane. In terms of biological role, f(1)F(0) ATP synthase produces ATP from ADP in the presence of a proton or sodium gradient. F-type ATPases consist of two structural domains, F(1) containing the extramembraneous catalytic core and F(0) containing the membrane proton channel, linked together by a central stalk and a peripheral stalk. During catalysis, ATP synthesis in the catalytic domain of F(1) is coupled via a rotary mechanism of the central stalk subunits to proton translocation. Functionally, this protein is part of the stalk that links CF(0) to CF(1). It either transmits conformational changes from CF(0) to CF(1) or is implicated in proton conduction. This chain is ATP synthase subunit delta, found in Xanthomonas axonopodis pv. citri (strain 306).